The primary structure comprises 296 residues: Protein ea31 (296 aa).

The sequence is that of Protein ea31 (ea31) from Escherichia phage lambda (Bacteriophage lambda).